The sequence spans 189 residues: MDTEYEQVNKPWNELYKETTLGNKLTVNVGMEDQEVPLLPSNFLTKVRVGLSGGYITMRRIRIKIIPLVSRKAGVSGKLYLRDISDTTGRKLHCTESLDLGREIRLTMQHLDFSVSTRSDVPIVFGFEELVSPFLEGRELFSISVRWQFGLSKNCYSLPQSKWKVMYQEDALKVLKPSKKKASKTDSSV.

Belongs to the tombusvirus/aureusvirus movement protein p22 family. Interacts with host protein HFI22. Phosphorylated.

Its subcellular location is the host membrane. In terms of biological role, transports viral genome to neighboring plant cells directly through plasmosdesmata, without any budding. The movement protein allows efficient cell to cell propagation, by bypassing the host cell wall barrier. In Capsicum annuum (Capsicum pepper), this protein is Movement protein.